We begin with the raw amino-acid sequence, 283 residues long: Pantothenate synthetase (283 aa).

ATP is bound at residue Met30–His37. His37 (proton donor) is an active-site residue. A (R)-pantoate-binding site is contributed by Gln61. Gln61 contacts beta-alanine. Gly147–Asp150 contributes to the ATP binding site. Gln153 provides a ligand contact to (R)-pantoate. ATP is bound by residues Val176 and Met184–Arg187.

Belongs to the pantothenate synthetase family. As to quaternary structure, homodimer.

It is found in the cytoplasm. The catalysed reaction is (R)-pantoate + beta-alanine + ATP = (R)-pantothenate + AMP + diphosphate + H(+). It functions in the pathway cofactor biosynthesis; (R)-pantothenate biosynthesis; (R)-pantothenate from (R)-pantoate and beta-alanine: step 1/1. Functionally, catalyzes the condensation of pantoate with beta-alanine in an ATP-dependent reaction via a pantoyl-adenylate intermediate. The sequence is that of Pantothenate synthetase from Trichlorobacter lovleyi (strain ATCC BAA-1151 / DSM 17278 / SZ) (Geobacter lovleyi).